Reading from the N-terminus, the 508-residue chain is Erythropoietin receptor (508 aa).

The N-terminal stretch at 1–24 is a signal peptide; the sequence is MNHLWTHLWPGVGSLCLLLAGAAW. Residues 25–250 lie on the Extracellular side of the membrane; the sequence is ASLPKPLDPK…SLLTASDLDP (226 aa). Cysteines 52 and 62 form a disulfide. N-linked (GlcNAc...) asparagine glycosylation is present at asparagine 76. A disulfide bond links cysteine 91 and cysteine 107. Residues 148–247 form the Fibronectin type-III domain; that stretch reads PPAGLLARRA…EPASLLTASD (100 aa). Asparagine 184 carries N-linked (GlcNAc...) asparagine glycosylation. The WSXWS motif signature appears at 233 to 237; that stretch reads WSAWS. The chain crosses the membrane as a helical span at residues 251–273; it reads LILTLSLILVLILLLLAVLALLS. Residues 274-508 lie on the Cytoplasmic side of the membrane; it reads HRRTLKQKIW…PSPPGYVACS (235 aa). Residue lysine 281 forms a Glycyl lysine isopeptide (Lys-Gly) (interchain with G-Cter in ubiquitin) linkage. The Box 1 motif signature appears at 282–290; that stretch reads IWPGIPSPE. Residues tyrosine 368 and tyrosine 426 each carry the phosphotyrosine; by JAK2 modification. Positions 452-457 match the ITIM motif motif; the sequence is IKYLYL. Lysine 453 is covalently cross-linked (Glycyl lysine isopeptide (Lys-Gly) (interchain with G-Cter in ubiquitin)). Phosphotyrosine; by JAK2 occurs at positions 454, 456, 468, 489, and 504. Residues 467–508 form a disordered region; the sequence is DYSSGGSQGAQGDSLNSPFLNPYENSLIPAPEPSPPGYVACS.

The protein belongs to the type I cytokine receptor family. Type 1 subfamily. In terms of assembly, forms homodimers on EPO stimulation. The tyrosine-phosphorylated form interacts with several SH2 domain-containing proteins including LYN, the adapter protein SH2B2, PTPN6, PTPN11, JAK2, PI3 kinases, STAT5A/B, SOCS3, CRKL. Interacts with INPP5D/SHIP1. SH2B2 binding inhibits the JAK-STAT signaling. Interacts with RHEX; this interaction occurs in a erythropoietin (EPO)-dependent manner. Interacts with ATXN2L. On EPO stimulation, phosphorylated on C-terminal tyrosine residues by JAK2. The phosphotyrosine motifs are also recruitment sites for several SH2-containing proteins and adapter proteins which mediate cell proliferation. Phosphorylation on Tyr-454 is required for PTPN6 interaction, Tyr-426 for PTPN11. Tyr-426 is also required for SOCS3 binding, but Tyr-454/Tyr-456 motif is the preferred binding site. In terms of processing, ubiquitinated by the ECS(SOCS2) complex following ligand-binding and phosphorylation by JAK2, leading to its degradation by the proteasome. Regulation by the ECS(SOCS2) complex acts as a negative feedback loop of erythropoietin-mediated signaling pathway. Ubiquitination at Lys-281 mediates receptor internalization, whereas ubiquitination at Lys-453 promotes trafficking of activated receptors to the lysosomes for degradation. Ubiquitinated by NOSIP; appears to be either multi-monoubiquitinated or polyubiquitinated. Ubiquitination mediates proliferation and survival of EPO-dependent cells.

The protein localises to the cell membrane. Its function is as follows. Receptor for erythropoietin, which mediates erythropoietin-induced erythroblast proliferation and differentiation. Upon EPO stimulation, EPOR dimerizes triggering the JAK2/STAT5 signaling cascade. In some cell types, can also activate STAT1 and STAT3. May also activate the LYN tyrosine kinase. Isoform EPOR-T acts as a dominant-negative receptor of EPOR-mediated signaling. The protein is Erythropoietin receptor (EPOR) of Canis lupus familiaris (Dog).